We begin with the raw amino-acid sequence, 411 residues long: Translation initiation factor 2 subunit gamma (411 aa).

The tr-type G domain maps to 9-203 (QAEVNIGMVG…AIEDFIPTPK (195 aa)). The tract at residues 18-25 (GHVDHGKT) is G1. Mg(2+) contacts are provided by Asp21, Thr25, Gly46, and Thr48. Position 21 to 26 (21 to 26 (DHGKTT)) interacts with GTP. The tract at residues 46 to 50 (GITIK) is G2. Zn(2+)-binding residues include Cys61, Cys64, Cys73, and Cys76. Residues 90–93 (DAPG) are G3. GTP-binding positions include 146-149 (NKIE) and 181-183 (SAL). A G4 region spans residues 146–149 (NKIE). The G5 stretch occupies residues 181–183 (SAL).

The protein belongs to the TRAFAC class translation factor GTPase superfamily. Classic translation factor GTPase family. EIF2G subfamily. As to quaternary structure, heterotrimer composed of an alpha, a beta and a gamma chain. Mg(2+) serves as cofactor.

It catalyses the reaction GTP + H2O = GDP + phosphate + H(+). Functionally, eIF-2 functions in the early steps of protein synthesis by forming a ternary complex with GTP and initiator tRNA. The chain is Translation initiation factor 2 subunit gamma from Pyrococcus abyssi (strain GE5 / Orsay).